Consider the following 87-residue polypeptide: Small cysteine-rich outer membrane protein omcA (87 aa).

Residues 1 to 19 (MKKAVLLATVFCGVVGLTS) form the signal peptide. The N-palmitoyl cysteine moiety is linked to residue Cys20. Cys20 carries the S-diacylglycerol cysteine lipid modification.

Part of a disulfide cross-linked outer membrane complex (COMC) composed of the major outer membrane porin (MOMP), the small cysteine-rich protein (omcA) and the large cysteine-rich periplasmic protein (omcB). In terms of processing, N-terminal amide-linked and S-diacylglycerol cysteine-linked to 16:0, 18:0, 15:0 branched, and 17:0 branched fatty acids (ratio 6:5:3:4) in the EB stage. The exact distribution of fatty acids has not been determined. The N-terminus is blocked.

Its subcellular location is the cell outer membrane. Its function is as follows. In elementary bodies (EBs, the infectious stage, which is able to survive outside the host cell) provides the structural integrity of the outer envelope through disulfide cross-links with the large cysteine-rich periplasmic protein and the major outer membrane porin. It has been described in publications as the Sarkosyl-insoluble COMC (Chlamydia outer membrane complex), and serves as the functional equivalent of peptidoglycan. This chain is Small cysteine-rich outer membrane protein omcA (omcA), found in Chlamydia psittaci (Chlamydophila psittaci).